An 84-amino-acid polypeptide reads, in one-letter code: Cell division topological specificity factor (84 aa).

The protein belongs to the MinE family.

In terms of biological role, prevents the cell division inhibition by proteins MinC and MinD at internal division sites while permitting inhibition at polar sites. This ensures cell division at the proper site by restricting the formation of a division septum at the midpoint of the long axis of the cell. This chain is Cell division topological specificity factor, found in Cupriavidus metallidurans (strain ATCC 43123 / DSM 2839 / NBRC 102507 / CH34) (Ralstonia metallidurans).